A 342-amino-acid polypeptide reads, in one-letter code: tRNA-dihydrouridine(20/20a) synthase (342 aa).

Residues 10–12 (PMV) and glutamine 63 contribute to the FMN site. The Proton donor role is filled by cysteine 93. Residues lysine 132, histidine 164, 203–205 (NGG), and 225–226 (GR) each bind FMN. A compositionally biased stretch (basic and acidic residues) spans 313–331 (EEEVGEEGEKEKPGPRGQR). A disordered region spans residues 313–342 (EEEVGEEGEKEKPGPRGQREAAPGPAREGV).

This sequence belongs to the Dus family. DusA subfamily. Requires FMN as cofactor.

It catalyses the reaction 5,6-dihydrouridine(20) in tRNA + NADP(+) = uridine(20) in tRNA + NADPH + H(+). It carries out the reaction 5,6-dihydrouridine(20) in tRNA + NAD(+) = uridine(20) in tRNA + NADH + H(+). The enzyme catalyses 5,6-dihydrouridine(20a) in tRNA + NADP(+) = uridine(20a) in tRNA + NADPH + H(+). The catalysed reaction is 5,6-dihydrouridine(20a) in tRNA + NAD(+) = uridine(20a) in tRNA + NADH + H(+). Its function is as follows. Catalyzes the synthesis of 5,6-dihydrouridine (D), a modified base found in the D-loop of most tRNAs, via the reduction of the C5-C6 double bond in target uridines. Specifically modifies U20 and U20a in tRNAs. The chain is tRNA-dihydrouridine(20/20a) synthase (dus) from Thermus thermophilus (strain ATCC 27634 / DSM 579 / HB8).